The sequence spans 500 residues: MAPEPTPVDAASLTYEAVIGLEIHCQLSTQTKIFSSSSTQFGAPPNTNIDPVCLGLPGTLPVLNEKVLEYAVKAGLALNCQIAPYSKFDRKQYFYPDLPKNYQISQYDLPIAHHGYLEIELVDDKGTARRKKIGITRLHMEEDAGKLVHAGSDRLSGSAYSLVDLNRAGVPLVEIVSEPDLRTGQEAAEYAQELRRILRYLGVCDGNMQEGSLRCDVNISVRPVGSNTFGTKVEIKNMNSFSAIQRAIDYEIERQVAALKAGEPIVQETRLWDEATQETRTMRVKEGSSDYRYFPEPDLGPIEVTAEQLAAWRAELPELPAQKRRRYESEWGLPPQDARVLTDERAVAEYFEATVVAGAPPKLAANWIMGDITAYLKEQKLAIEALPLKPAELAELIQLIEAGTISGKIAKEILPELLSQGGSPKALVERKGLSQISDVATLEAMIDEVLAAHPNELEQYRAGKTKLQGFFVGQLMKKSGGRADPKLANQLLAQKLNPGS.

Belongs to the GatB/GatE family. GatB subfamily. In terms of assembly, heterotrimer of A, B and C subunits.

The catalysed reaction is L-glutamyl-tRNA(Gln) + L-glutamine + ATP + H2O = L-glutaminyl-tRNA(Gln) + L-glutamate + ADP + phosphate + H(+). It carries out the reaction L-aspartyl-tRNA(Asn) + L-glutamine + ATP + H2O = L-asparaginyl-tRNA(Asn) + L-glutamate + ADP + phosphate + 2 H(+). In terms of biological role, allows the formation of correctly charged Asn-tRNA(Asn) or Gln-tRNA(Gln) through the transamidation of misacylated Asp-tRNA(Asn) or Glu-tRNA(Gln) in organisms which lack either or both of asparaginyl-tRNA or glutaminyl-tRNA synthetases. The reaction takes place in the presence of glutamine and ATP through an activated phospho-Asp-tRNA(Asn) or phospho-Glu-tRNA(Gln). The polypeptide is Aspartyl/glutamyl-tRNA(Asn/Gln) amidotransferase subunit B (Thermosynechococcus vestitus (strain NIES-2133 / IAM M-273 / BP-1)).